A 497-amino-acid chain; its full sequence is Galactose/methyl galactoside import ATP-binding protein MglA (497 aa).

ABC transporter domains lie at Leu-6–Ser-241 and Val-252–Leu-497. Gly-38 to Ser-45 is a binding site for ATP.

Belongs to the ABC transporter superfamily. Galactose/methyl galactoside importer (TC 3.A.1.2.3) family. As to quaternary structure, the complex is composed of one ATP-binding protein (MglA), two transmembrane proteins (MglC) and a solute-binding protein (MglB).

It is found in the cell inner membrane. The enzyme catalyses D-galactose(out) + ATP + H2O = D-galactose(in) + ADP + phosphate + H(+). It catalyses the reaction methyl beta-D-galactoside(out) + ATP + H2O = methyl beta-D-galactoside(in) + ADP + phosphate + H(+). Its function is as follows. Part of the ABC transporter complex MglABC involved in galactose/methyl galactoside import. Responsible for energy coupling to the transport system. This is Galactose/methyl galactoside import ATP-binding protein MglA from Treponema denticola (strain ATCC 35405 / DSM 14222 / CIP 103919 / JCM 8153 / KCTC 15104).